A 416-amino-acid chain; its full sequence is Gamma-glutamyl phosphate reductase (416 aa).

Belongs to the gamma-glutamyl phosphate reductase family.

It is found in the cytoplasm. It carries out the reaction L-glutamate 5-semialdehyde + phosphate + NADP(+) = L-glutamyl 5-phosphate + NADPH + H(+). The protein operates within amino-acid biosynthesis; L-proline biosynthesis; L-glutamate 5-semialdehyde from L-glutamate: step 2/2. Functionally, catalyzes the NADPH-dependent reduction of L-glutamate 5-phosphate into L-glutamate 5-semialdehyde and phosphate. The product spontaneously undergoes cyclization to form 1-pyrroline-5-carboxylate. This Salmonella typhi protein is Gamma-glutamyl phosphate reductase.